A 357-amino-acid polypeptide reads, in one-letter code: Probable RNA methyltransferase Daro_1157 (357 aa).

Residue E91 is the Proton acceptor of the active site. The Radical SAM core domain maps to L94–D320. An intrachain disulfide couples C101 to C325. [4Fe-4S] cluster is bound by residues C108, C112, and C115. S-adenosyl-L-methionine contacts are provided by residues G153–E154, S183, S206–H208, and N282. Residue C325 is the S-methylcysteine intermediate of the active site.

This sequence belongs to the radical SAM superfamily. RlmN family. The cofactor is [4Fe-4S] cluster.

It localises to the cytoplasm. This is Probable RNA methyltransferase Daro_1157 from Dechloromonas aromatica (strain RCB).